Reading from the N-terminus, the 60-residue chain is UPF0181 protein ESA_01442 (60 aa).

This sequence belongs to the UPF0181 family.

The sequence is that of UPF0181 protein ESA_01442 from Cronobacter sakazakii (strain ATCC BAA-894) (Enterobacter sakazakii).